Consider the following 1004-residue polypeptide: NACHT, LRR and PYD domains-containing protein 9C (1004 aa).

The Pyrin domain occupies 1-92 (MVDSSSYGLL…TMAQIERRDK (92 aa)). The NACHT domain occupies 143–465 (ATAVVLGTRG…KQDKDTYHPV (323 aa)). 149–156 (GTRGKGKT) contacts ATP. LRR repeat units follow at residues 750-770 (KVKH…MFLC), 779-800 (VLES…HLYE), 807-828 (HLSL…LLCE), 836-857 (TLKE…EISA), and 864-884 (NLKT…KRLC).

Belongs to the NLRP family. Oocyte specific.

The protein resides in the cytoplasm. Its function is as follows. May be involved in inflammation. This is NACHT, LRR and PYD domains-containing protein 9C (Nlrp9c) from Mus musculus (Mouse).